Consider the following 216-residue polypeptide: Probable Golgi SNAP receptor complex member 2 (216 aa).

The Cytoplasmic portion of the chain corresponds to 1–194 (MESLYHQTNN…IERRLVEDRR (194 aa)). Positions 62 to 103 (QRQSSKLRVDQLKYDLRHLQTSLQTARERRQRRMQEISEREQ) form a coiled coil. Residues 195–215 (IFIGGVVVTLLIIALIIYFLV) form a helical; Anchor for type IV membrane protein membrane-spanning segment. Position 216 (L216) is a topological domain, vesicular.

Belongs to the GOSR2 family. In terms of assembly, part of a unique SNARE complex.

The protein resides in the golgi apparatus. Its subcellular location is the cis-Golgi network membrane. The protein localises to the golgi apparatus membrane. It is found in the endoplasmic reticulum membrane. In terms of biological role, involved in transport of proteins from the cis/medial-Golgi to the trans-Golgi network. In Drosophila melanogaster (Fruit fly), this protein is Probable Golgi SNAP receptor complex member 2.